Reading from the N-terminus, the 302-residue chain is Homoserine O-acetyltransferase (302 aa).

The active-site Acyl-thioester intermediate is the Cys142. Positions 163 and 192 each coordinate substrate. His235 serves as the catalytic Proton acceptor. The active site involves Glu237. Arg249 serves as a coordination point for substrate.

This sequence belongs to the MetA family.

The protein localises to the cytoplasm. It catalyses the reaction L-homoserine + acetyl-CoA = O-acetyl-L-homoserine + CoA. It functions in the pathway amino-acid biosynthesis; L-methionine biosynthesis via de novo pathway; O-acetyl-L-homoserine from L-homoserine: step 1/1. Functionally, transfers an acetyl group from acetyl-CoA to L-homoserine, forming acetyl-L-homoserine. The protein is Homoserine O-acetyltransferase of Bacillus licheniformis (strain ATCC 14580 / DSM 13 / JCM 2505 / CCUG 7422 / NBRC 12200 / NCIMB 9375 / NCTC 10341 / NRRL NRS-1264 / Gibson 46).